Here is a 299-residue protein sequence, read N- to C-terminus: tRNA pseudouridine synthase B (299 aa).

Catalysis depends on aspartate 38, which acts as the Nucleophile.

Belongs to the pseudouridine synthase TruB family. Type 1 subfamily.

The catalysed reaction is uridine(55) in tRNA = pseudouridine(55) in tRNA. Responsible for synthesis of pseudouridine from uracil-55 in the psi GC loop of transfer RNAs. The sequence is that of tRNA pseudouridine synthase B from Pediococcus pentosaceus (strain ATCC 25745 / CCUG 21536 / LMG 10740 / 183-1w).